We begin with the raw amino-acid sequence, 930 residues long: Translation initiation factor IF-2 (930 aa).

The disordered stretch occupies residues 31-317; it reads FVKSASSTVE…RKSKRAKRAE (287 aa). The span at 61–78 shows a compositional bias: low complexity; sequence PAAGASNGAPAKPSAPGA. 2 stretches are compositionally biased toward pro residues: residues 79 to 99 and 108 to 120; these read RPGP…PAPA and PAAP…PPAP. Positions 121–135 are enriched in low complexity; the sequence is AASAAPPSAPEAPSA. Pro residues-rich tracts occupy residues 136–158 and 178–192; these read RPTP…PAPR and PRPQ…PRPG. The segment covering 193-205 has biased composition (gly residues); sequence PGAGGPRPGGGPR. Residues 212-242 are compositionally biased toward pro residues; the sequence is NMPPRPVGGPRPGGGPRPGGGPRPGAGPRPT. A compositionally biased stretch (gly residues) spans 244-301; it reads GGAGRPGGGGGGNYRGGGAGGGGGAGGAAAGGFRGRPGGGGGRPGQRGGAAGAFGRPG. Basic residues predominate over residues 305–314; that stretch reads KRGRKSKRAK. The region spanning 426 to 598 is the tr-type G domain; sequence FRPPVVTVMG…VVLTADASLD (173 aa). Positions 435-442 are G1; sequence GHVDHGKT. 435 to 442 is a binding site for GTP; it reads GHVDHGKT. The interval 460–464 is G2; it reads GITQH. The segment at 485 to 488 is G3; the sequence is DTPG. GTP is bound by residues 485-489 and 539-542; these read DTPGH and NKID. The tract at residues 539 to 542 is G4; the sequence is NKID. Residues 575–577 form a G5 region; it reads SAK.

Belongs to the TRAFAC class translation factor GTPase superfamily. Classic translation factor GTPase family. IF-2 subfamily.

The protein resides in the cytoplasm. Functionally, one of the essential components for the initiation of protein synthesis. Protects formylmethionyl-tRNA from spontaneous hydrolysis and promotes its binding to the 30S ribosomal subunits. Also involved in the hydrolysis of GTP during the formation of the 70S ribosomal complex. The sequence is that of Translation initiation factor IF-2 from Mycolicibacterium gilvum (strain PYR-GCK) (Mycobacterium gilvum (strain PYR-GCK)).